The primary structure comprises 91 residues: RNA-binding protein Hfq (91 aa).

The region spanning 9–68 (DPYLNALRRERIPVSIYLVNGIKLQGQIESFDQFVILLKNTVNQMVYKHAISTVVPARSV) is the Sm domain. The interval 68–91 (VSHHNNNHHTTPTEAVENVETQAE) is disordered.

It belongs to the Hfq family. As to quaternary structure, homohexamer.

Its function is as follows. RNA chaperone that binds small regulatory RNA (sRNAs) and mRNAs to facilitate mRNA translational regulation in response to envelope stress, environmental stress and changes in metabolite concentrations. Also binds with high specificity to tRNAs. In Haemophilus influenzae (strain 86-028NP), this protein is RNA-binding protein Hfq.